Reading from the N-terminus, the 227-residue chain is Probable GTP-binding protein EngB (227 aa).

In terms of domain architecture, EngB-type G spans 30-219 (KKPQIIVVGR…MVKINKNVNE (190 aa)). GTP-binding positions include 38–45 (GRSNVGKS), 63–67 (GVTLK), 80–83 (DLPG), 160–163 (NKMD), and 197–199 (IGI). 2 residues coordinate Mg(2+): serine 45 and threonine 65.

The protein belongs to the TRAFAC class TrmE-Era-EngA-EngB-Septin-like GTPase superfamily. EngB GTPase family. Requires Mg(2+) as cofactor.

Its function is as follows. Necessary for normal cell division and for the maintenance of normal septation. This Methanococcus aeolicus (strain ATCC BAA-1280 / DSM 17508 / OCM 812 / Nankai-3) protein is Probable GTP-binding protein EngB.